The primary structure comprises 234 residues: Ribosome maturation protein SDO1 homolog (234 aa).

It belongs to the SDO1/SBDS family.

The protein is Ribosome maturation protein SDO1 homolog of Archaeoglobus fulgidus (strain ATCC 49558 / DSM 4304 / JCM 9628 / NBRC 100126 / VC-16).